A 254-amino-acid polypeptide reads, in one-letter code: Phosphoribosylaminoimidazole-succinocarboxamide synthase (254 aa).

The protein belongs to the SAICAR synthetase family.

The enzyme catalyses 5-amino-1-(5-phospho-D-ribosyl)imidazole-4-carboxylate + L-aspartate + ATP = (2S)-2-[5-amino-1-(5-phospho-beta-D-ribosyl)imidazole-4-carboxamido]succinate + ADP + phosphate + 2 H(+). It functions in the pathway purine metabolism; IMP biosynthesis via de novo pathway; 5-amino-1-(5-phospho-D-ribosyl)imidazole-4-carboxamide from 5-amino-1-(5-phospho-D-ribosyl)imidazole-4-carboxylate: step 1/2. The chain is Phosphoribosylaminoimidazole-succinocarboxamide synthase from Sinorhizobium fredii (strain NBRC 101917 / NGR234).